We begin with the raw amino-acid sequence, 73 residues long: Large ribosomal subunit protein bL31 (73 aa).

Belongs to the bacterial ribosomal protein bL31 family. Type A subfamily. As to quaternary structure, part of the 50S ribosomal subunit.

Binds the 23S rRNA. The sequence is that of Large ribosomal subunit protein bL31 from Sinorhizobium fredii (strain NBRC 101917 / NGR234).